The following is a 943-amino-acid chain: Lysine-specific demethylase JMJ21 (943 aa).

The F-box domain occupies 14–60; the sequence is LGSLSVLPDETICVLLEYLAPRDIAHLACVSSVMYILCNEEPLWMSL. The 164-residue stretch at 216 to 379 folds into the JmjC domain; it reads EAAPELLKDY…FVCLDMAPGY (164 aa). Residues His262, Asp264, and His347 each contribute to the Fe cation site. Positions 396-410 are enriched in acidic residues; that stretch reads NSEDLEEETHDEEDN. Positions 396–438 are disordered; that stretch reads NSEDLEEETHDEEDNTLSYSDLTRKEKRTRMNGGGETENREED.

This sequence belongs to the JARID1 histone demethylase family. Fe(2+) is required as a cofactor. In terms of tissue distribution, mostly expressed in leaves, and, to a lower extent, in inflorescences, roots, siliques and stems.

It is found in the nucleus. Its function is as follows. May function as histone H3 lysine demethylase and be involved in regulation of gene expression. The polypeptide is Lysine-specific demethylase JMJ21 (Arabidopsis thaliana (Mouse-ear cress)).